The sequence spans 575 residues: Sulfite reductase [NADPH] hemoprotein beta-component (575 aa).

Cysteine 439, cysteine 445, cysteine 484, and cysteine 488 together coordinate [4Fe-4S] cluster. Cysteine 488 serves as a coordination point for siroheme.

The protein belongs to the nitrite and sulfite reductase 4Fe-4S domain family. In terms of assembly, alpha(8)-beta(8). The alpha component is a flavoprotein, the beta component is a hemoprotein. Siroheme is required as a cofactor. It depends on [4Fe-4S] cluster as a cofactor.

The enzyme catalyses hydrogen sulfide + 3 NADP(+) + 3 H2O = sulfite + 3 NADPH + 4 H(+). It participates in sulfur metabolism; hydrogen sulfide biosynthesis; hydrogen sulfide from sulfite (NADPH route): step 1/1. Its function is as follows. Component of the sulfite reductase complex that catalyzes the 6-electron reduction of sulfite to sulfide. This is one of several activities required for the biosynthesis of L-cysteine from sulfate. This is Sulfite reductase [NADPH] hemoprotein beta-component from Blochmanniella pennsylvanica (strain BPEN).